The following is a 729-amino-acid chain: Zorya protein ZorA (729 aa).

A run of 3 helical transmembrane segments spans residues 20 to 40 (PATVIGLVSFAFLCFIFFYFF), 135 to 155 (LPGILTGVGIIGTFYGLMIGL), and 177 to 197 (VLYAFLGSAFAITFSILITWL).

The protein belongs to the MotA family.

The protein localises to the cell inner membrane. Functionally, component of antiviral defense system Zorya type I, composed of ZorA, ZorB, ZorC and ZorD. Expression of Zorya type I in E.coli (strain MG1655) confers 10,000-fold resistance to phage SECphi27, 100-fold resistance to lambda, and 10-fold resistance to T7. While most T7 infected Zorya-containing cells undergo abortive infection, a minority produce viable phage progeny. These eventually accumulate to a high multiplicity of infection, leading to culture collapse by 2 hours after initial infection. ZorA and ZorB probably assemble in the cell inner membrane and exert their effect there. The polypeptide is Zorya protein ZorA (Escherichia coli O139:H28 (strain E24377A / ETEC)).